A 476-amino-acid polypeptide reads, in one-letter code: Bifunctional protein HldE (476 aa).

The ribokinase stretch occupies residues 1-318 (MKVTLPEFER…ENAVRGRADT (318 aa)). An ATP-binding site is contributed by 195–198 (NLSE). The active site involves Asp264. Residues 344 to 476 (MTNGVFDILH…IIKKIQKDSQ (133 aa)) form a cytidylyltransferase region.

The protein in the N-terminal section; belongs to the carbohydrate kinase PfkB family. In the C-terminal section; belongs to the cytidylyltransferase family. Homodimer.

The enzyme catalyses D-glycero-beta-D-manno-heptose 7-phosphate + ATP = D-glycero-beta-D-manno-heptose 1,7-bisphosphate + ADP + H(+). It catalyses the reaction D-glycero-beta-D-manno-heptose 1-phosphate + ATP + H(+) = ADP-D-glycero-beta-D-manno-heptose + diphosphate. The protein operates within nucleotide-sugar biosynthesis; ADP-L-glycero-beta-D-manno-heptose biosynthesis; ADP-L-glycero-beta-D-manno-heptose from D-glycero-beta-D-manno-heptose 7-phosphate: step 1/4. It participates in nucleotide-sugar biosynthesis; ADP-L-glycero-beta-D-manno-heptose biosynthesis; ADP-L-glycero-beta-D-manno-heptose from D-glycero-beta-D-manno-heptose 7-phosphate: step 3/4. Its function is as follows. Catalyzes the phosphorylation of D-glycero-D-manno-heptose 7-phosphate at the C-1 position to selectively form D-glycero-beta-D-manno-heptose-1,7-bisphosphate. Functionally, catalyzes the ADP transfer from ATP to D-glycero-beta-D-manno-heptose 1-phosphate, yielding ADP-D-glycero-beta-D-manno-heptose. The chain is Bifunctional protein HldE from Enterobacter sp. (strain 638).